The chain runs to 223 residues: MEFKKFFKKRLWNNNSSLVQLLGLCPILAMTTNTINAIGLGITTTFVLTITNSIISILKNFIPKDIRIPIYMIIVSSTVTCIEMLLHAYQFNLYQSLGVFIPLIVTNCIVVGRADCIAYKSSFVISFLDGMSIGLGSTFAMFVIGSIREILGNGTFLFGANKIFNVLDHSFFFTFIDKNSTIILAMLPSGGFLVLGFVIAFKNYLDLGKKNCLKCFHSCKLKK.

7 consecutive transmembrane segments (helical) span residues 17–37 (SLVQLLGLCPILAMTTNTINA), 38–58 (IGLGITTTFVLTITNSIISIL), 68–88 (IPIYMIIVSSTVTCIEMLLHA), 91–111 (FNLYQSLGVFIPLIVTNCIVV), 124–144 (VISFLDGMSIGLGSTFAMFVI), 156–176 (FLFGANKIFNVLDHSFFFTFI), and 181–201 (TIILAMLPSGGFLVLGFVIAF).

This sequence belongs to the NqrDE/RnfAE family. As to quaternary structure, the complex is composed of six subunits: RnfA, RnfB, RnfC, RnfD, RnfE and RnfG.

It localises to the cell inner membrane. Part of a membrane-bound complex that couples electron transfer with translocation of ions across the membrane. This Buchnera aphidicola subsp. Schizaphis graminum (strain Sg) protein is Ion-translocating oxidoreductase complex subunit E.